Reading from the N-terminus, the 217-residue chain is Heart- and neural crest derivatives-expressed protein 2 (217 aa).

Positions 76–116 (DHSHYGGVPPGAGPPGLGGPRPVKRRGTANRKERRRTQSIN) are disordered. Positions 83–94 (VPPGAGPPGLGG) are enriched in gly residues. Positions 97 to 112 (PVKRRGTANRKERRRT) are enriched in basic residues. The region spanning 99-151 (KRRGTANRKERRRTQSINSAFAELRECIPNVPADTKLSKIKTLRLATSYIAYL) is the bHLH domain.

Efficient DNA binding requires dimerization with another bHLH protein. Forms homodimers and heterodimers with TCF3 gene products E12 and E47, HAND1 and HEY1, HEY2 and HEYL (hairy-related transcription factors).

It localises to the nucleus. Its function is as follows. Essential for cardiac morphogenesis, particularly for the formation of the right ventricle and of the aortic arch arteries. Required for vascular development and regulation of angiogenesis, possibly through a VEGF signaling pathway. Also plays an important role in limb development, particularly in the establishment of anterior-posterior polarization, acting as an upstream regulator of sonic hedgehog (SHH) induction in the limb bud. Is involved in the development of branchial arches, which give rise to unique structures in the head and neck. Binds DNA on E-box consensus sequence 5'-CANNTG-3'. The protein is Heart- and neural crest derivatives-expressed protein 2 (Hand2) of Rattus norvegicus (Rat).